We begin with the raw amino-acid sequence, 124 residues long: Large ribosomal subunit protein bL12 (124 aa).

This sequence belongs to the bacterial ribosomal protein bL12 family. As to quaternary structure, homodimer. Part of the ribosomal stalk of the 50S ribosomal subunit. Forms a multimeric L10(L12)X complex, where L10 forms an elongated spine to which 2 to 4 L12 dimers bind in a sequential fashion. Binds GTP-bound translation factors.

Functionally, forms part of the ribosomal stalk which helps the ribosome interact with GTP-bound translation factors. Is thus essential for accurate translation. This chain is Large ribosomal subunit protein bL12, found in Ralstonia pickettii (strain 12J).